Consider the following 132-residue polypeptide: Ribonuclease P protein component 4 (132 aa).

Zn(2+) contacts are provided by Cys67, Cys70, Cys96, and Cys99.

It belongs to the eukaryotic/archaeal RNase P protein component 4 family. In terms of assembly, consists of a catalytic RNA component and at least 4-5 protein subunits. It depends on Zn(2+) as a cofactor.

It is found in the cytoplasm. The catalysed reaction is Endonucleolytic cleavage of RNA, removing 5'-extranucleotides from tRNA precursor.. In terms of biological role, part of ribonuclease P, a protein complex that generates mature tRNA molecules by cleaving their 5'-ends. This chain is Ribonuclease P protein component 4, found in Thermococcus kodakarensis (strain ATCC BAA-918 / JCM 12380 / KOD1) (Pyrococcus kodakaraensis (strain KOD1)).